Reading from the N-terminus, the 681-residue chain is Transmembrane protein 168-A (681 aa).

9 helical membrane-spanning segments follow: residues 16–36, 47–67, 73–93, 135–155, 156–176, 184–204, 252–272, 281–301, and 346–365; these read FLRC…CLGM, MILV…ILYY, SASL…LCFL, PVVI…ASIS, LVFD…ALII, LALP…FQSL, FSLF…AFKL, VIPG…VFLV, and LVLF…WQVA. Residue Asn517 is glycosylated (N-linked (GlcNAc...) asparagine).

Belongs to the TMEM168 family.

The protein localises to the nucleus membrane. In terms of biological role, plays a key role in maintaining the cardiac electrical stability by modulating cell surface expression of SCN5A. The protein is Transmembrane protein 168-A (tmem168a) of Danio rerio (Zebrafish).